The following is a 501-amino-acid chain: Lysine--tRNA ligase (501 aa).

Mg(2+)-binding residues include Glu-411 and Glu-418.

Belongs to the class-II aminoacyl-tRNA synthetase family. Homodimer. It depends on Mg(2+) as a cofactor.

It localises to the cytoplasm. It catalyses the reaction tRNA(Lys) + L-lysine + ATP = L-lysyl-tRNA(Lys) + AMP + diphosphate. This chain is Lysine--tRNA ligase, found in Magnetococcus marinus (strain ATCC BAA-1437 / JCM 17883 / MC-1).